Consider the following 1755-residue polypeptide: Transposon Ty1-ER2 Gag-Pol polyprotein (1755 aa).

Polar residues-rich tracts occupy residues 1–10 (MESQQLSNYP), 48–60 (TKAN…TPAS), and 127–152 (QSQF…GNTF). Disordered regions lie at residues 1–93 (MESQ…MMTQ), 126–173 (PQSQ…RPPP), and 352–421 (GSRN…SKST). Low complexity predominate over residues 153–165 (TDSSSADSDMTST). The RNA-binding stretch occupies residues 299 to 401 (NNGIHINNKV…NSKSKTARAH (103 aa)). Low complexity predominate over residues 402 to 418 (NVSTSNNSPSTDNDSIS). The active-site For protease activity; shared with dimeric partner is the Asp461. The segment at 583 to 640 (NVHTSESTRKYPYPFIHRMLAHANAQTIRYSLKNNTITYFNESDVDWSSAIDYQCPDC) is integrase-type zinc finger-like. Residues 660–835 (NSYEPFQYLH…AGLDISTLLP (176 aa)) enclose the Integrase catalytic domain. The Mg(2+) site is built by Asp671 and Asp736. Residues 958-1170 (AVSPTDSTPP…SSLGGIGDSN (213 aa)) form a disordered region. Over residues 960–969 (SPTDSTPPST) the composition is skewed to low complexity. Over residues 1005–1015 (STPQISDIEST) the composition is skewed to polar residues. The span at 1038-1053 (ESSHASKSKDFRHSDS) shows a compositional bias: basic and acidic residues. 2 stretches are compositionally biased toward polar residues: residues 1054–1082 (YSDN…QTSE) and 1095–1106 (SIDTSSSESNSL). Residues 1178–1212 (KKRSLEDNETEIKVSRDTWNTKNMRSLEPPRSKKR) carry the Bipartite nuclear localization signal motif. Residues 1338 to 1476 (NNYYITQLDI…DILGLEIKYQ (139 aa)) form the Reverse transcriptase Ty1/copia-type domain. The Mg(2+) site is built by Asp1346, Asp1427, Asp1428, Asp1610, Glu1652, and Asp1685. In terms of domain architecture, RNase H Ty1/copia-type spans 1610–1752 (DASYGNQPYY…IKTFKLLTNK (143 aa)).

The capsid protein forms a homotrimer, from which the VLPs are assembled. The protease is a homodimer, whose active site consists of two apposed aspartic acid residues. Initially, virus-like particles (VLPs) are composed of the structural unprocessed proteins Gag and Gag-Pol, and also contain the host initiator methionine tRNA (tRNA(i)-Met) which serves as a primer for minus-strand DNA synthesis, and a dimer of genomic Ty RNA. Processing of the polyproteins occurs within the particle and proceeds by an ordered pathway, called maturation. First, the protease (PR) is released by autocatalytic cleavage of the Gag-Pol polyprotein yielding capsid protein p45 and a Pol-p154 precursor protein. This cleavage is a prerequisite for subsequent processing of Pol-p154 at the remaining sites to release the mature structural and catalytic proteins. Maturation takes place prior to the RT reaction and is required to produce transposition-competent VLPs.

The protein localises to the cytoplasm. It is found in the nucleus. The enzyme catalyses DNA(n) + a 2'-deoxyribonucleoside 5'-triphosphate = DNA(n+1) + diphosphate. It catalyses the reaction Endonucleolytic cleavage to 5'-phosphomonoester.. Capsid protein (CA) is the structural component of the virus-like particle (VLP), forming the shell that encapsulates the retrotransposons dimeric RNA genome. The particles are assembled from trimer-clustered units and there are holes in the capsid shells that allow for the diffusion of macromolecules. CA also has nucleocapsid-like chaperone activity, promoting primer tRNA(i)-Met annealing to the multipartite primer-binding site (PBS), dimerization of Ty1 RNA and initiation of reverse transcription. Functionally, the aspartyl protease (PR) mediates the proteolytic cleavages of the Gag and Gag-Pol polyproteins after assembly of the VLP. Its function is as follows. Reverse transcriptase/ribonuclease H (RT) is a multifunctional enzyme that catalyzes the conversion of the retro-elements RNA genome into dsDNA within the VLP. The enzyme displays a DNA polymerase activity that can copy either DNA or RNA templates, and a ribonuclease H (RNase H) activity that cleaves the RNA strand of RNA-DNA heteroduplexes during plus-strand synthesis and hydrolyzes RNA primers. The conversion leads to a linear dsDNA copy of the retrotransposon that includes long terminal repeats (LTRs) at both ends. In terms of biological role, integrase (IN) targets the VLP to the nucleus, where a subparticle preintegration complex (PIC) containing at least integrase and the newly synthesized dsDNA copy of the retrotransposon must transit the nuclear membrane. Once in the nucleus, integrase performs the integration of the dsDNA into the host genome. The polypeptide is Transposon Ty1-ER2 Gag-Pol polyprotein (TY1B-ER2) (Saccharomyces cerevisiae (strain ATCC 204508 / S288c) (Baker's yeast)).